A 273-amino-acid polypeptide reads, in one-letter code: Formamidopyrimidine-DNA glycosylase (273 aa).

Pro2 serves as the catalytic Schiff-base intermediate with DNA. Glu3 acts as the Proton donor in catalysis. The Proton donor; for beta-elimination activity role is filled by Lys58. DNA is bound by residues His91, Arg109, and Arg154. Residues 239–273 (FCYARTGEPCRICKTPIRQIVQGQRSTFYCPNCQK) form an FPG-type zinc finger. The active-site Proton donor; for delta-elimination activity is Arg263.

Belongs to the FPG family. In terms of assembly, monomer. Requires Zn(2+) as cofactor.

The enzyme catalyses Hydrolysis of DNA containing ring-opened 7-methylguanine residues, releasing 2,6-diamino-4-hydroxy-5-(N-methyl)formamidopyrimidine.. The catalysed reaction is 2'-deoxyribonucleotide-(2'-deoxyribose 5'-phosphate)-2'-deoxyribonucleotide-DNA = a 3'-end 2'-deoxyribonucleotide-(2,3-dehydro-2,3-deoxyribose 5'-phosphate)-DNA + a 5'-end 5'-phospho-2'-deoxyribonucleoside-DNA + H(+). Functionally, involved in base excision repair of DNA damaged by oxidation or by mutagenic agents. Acts as a DNA glycosylase that recognizes and removes damaged bases. Has a preference for oxidized purines, such as 7,8-dihydro-8-oxoguanine (8-oxoG). Has AP (apurinic/apyrimidinic) lyase activity and introduces nicks in the DNA strand. Cleaves the DNA backbone by beta-delta elimination to generate a single-strand break at the site of the removed base with both 3'- and 5'-phosphates. This is Formamidopyrimidine-DNA glycosylase from Janthinobacterium sp. (strain Marseille) (Minibacterium massiliensis).